A 70-amino-acid polypeptide reads, in one-letter code: MWRPAKXPALRCVATDGHRLARIDAVLPEGANGMPGVIVPRKTVNELRNVLDDDEAQIAVSVSETRCALA.

This sequence belongs to the beta sliding clamp family. As to quaternary structure, forms a ring-shaped head-to-tail homodimer around DNA which binds and tethers DNA polymerases and other proteins to the DNA. The DNA replisome complex has a single clamp-loading complex (3 tau and 1 each of delta, delta', psi and chi subunits) which binds 3 Pol III cores (1 core on the leading strand and 2 on the lagging strand) each with a beta sliding clamp dimer. Additional proteins in the replisome are other copies of gamma, psi and chi, Ssb, DNA helicase and RNA primase.

The protein resides in the cytoplasm. Confers DNA tethering and processivity to DNA polymerases and other proteins. Acts as a clamp, forming a ring around DNA (a reaction catalyzed by the clamp-loading complex) which diffuses in an ATP-independent manner freely and bidirectionally along dsDNA. Initially characterized for its ability to contact the catalytic subunit of DNA polymerase III (Pol III), a complex, multichain enzyme responsible for most of the replicative synthesis in bacteria; Pol III exhibits 3'-5' exonuclease proofreading activity. The beta chain is required for initiation of replication as well as for processivity of DNA replication. This Rhodobacter capsulatus (Rhodopseudomonas capsulata) protein is Beta sliding clamp (dnaN).